The sequence spans 1133 residues: Guanine nucleotide-binding protein G(s) subunit alpha isoforms XLas (1133 aa).

Disordered stretches follow at residues Met1–Leu195, Asp322–Ala552, Ser611–Lys648, and Arg724–Met744. Positions Leu31–Glu48 are enriched in low complexity. Residues Asp347–Ala362 are compositionally biased toward basic and acidic residues. Composition is skewed to low complexity over residues Pro391–Ala404, Gly459–Glu471, Ala482–Ser498, Ala515–Ala525, and Arg535–Ala552. Positions Pro633–Thr643 are enriched in pro residues. Over residues Lys732 to Met744 the composition is skewed to basic and acidic residues. Residues Met737–Arg761 adopt a coiled-coil conformation. Positions Cys778 to Leu1133 constitute a G-alpha domain. Positions Arg781–Thr794 are G1 motif. Gly786–Thr794 lines the GTP pocket. A Mg(2+)-binding site is contributed by Ser793. The segment at Phe807 to Ala828 is disordered. Residues Asp935–Thr943 are G2 motif. Residues Leu936–Thr943, Asp962–Gln966, and Asn1031–Asp1034 contribute to the GTP site. Residue Arg940 is modified to ADP-ribosylarginine; by cholera toxin. Thr943 lines the Mg(2+) pocket. The tract at residues Phe958–Arg967 is G3 motif. Positions Ile1027 to Asp1034 are G4 motif. At Ser1091 the chain carries Phosphoserine. The G5 motif stretch occupies residues Thr1103–Thr1108. Ala1105 provides a ligand contact to GTP.

Belongs to the G-alpha family. G(s) subfamily. G proteins are composed of 3 units; alpha, beta and gamma. The alpha chain contains the guanine nucleotide binding site. Interacts through its N-terminal region with ALEX which is produced from the same locus in a different open reading frame. This interaction may inhibit its adenylyl cyclase-stimulating activity. Interacts with MAGED2.

It is found in the cell membrane. The protein localises to the apical cell membrane. The catalysed reaction is GTP + H2O = GDP + phosphate + H(+). Its function is as follows. Guanine nucleotide-binding proteins (G proteins) function as transducers in numerous signaling pathways controlled by G protein-coupled receptors (GPCRs). The alpha chain contains the guanine nucleotide binding site and alternates between an active, GTP-bound state and an inactive, GDP-bound state. Signaling by an activated GPCR promotes GDP release and GTP binding. The alpha subunit has a low GTPase activity that converts bound GTP to GDP, thereby terminating the signal. Both GDP release and GTP hydrolysis are modulated by numerous regulatory proteins. Signaling involves the activation of adenylyl cyclases, resulting in increased levels of the signaling molecule cAMP. GNAS functions downstream of several GPCRs, including beta-adrenergic receptors. XLas isoforms interact with the same set of receptors as Gnas isoforms. This is Guanine nucleotide-binding protein G(s) subunit alpha isoforms XLas from Mus musculus (Mouse).